The following is a 306-amino-acid chain: ATP phosphoribosyltransferase (306 aa).

It belongs to the ATP phosphoribosyltransferase family.

It localises to the cytoplasm. It carries out the reaction 1-(5-phospho-beta-D-ribosyl)-ATP + diphosphate = 5-phospho-alpha-D-ribose 1-diphosphate + ATP. It functions in the pathway amino-acid biosynthesis; L-histidine biosynthesis; L-histidine from 5-phospho-alpha-D-ribose 1-diphosphate: step 1/9. Its function is as follows. Catalyzes the condensation of ATP and 5-phosphoribose 1-diphosphate to form N'-(5'-phosphoribosyl)-ATP (PR-ATP). Has a crucial role in the pathway because the rate of histidine biosynthesis seems to be controlled primarily by regulation of the enzymatic activity. This Candida glabrata (strain ATCC 2001 / BCRC 20586 / JCM 3761 / NBRC 0622 / NRRL Y-65 / CBS 138) (Yeast) protein is ATP phosphoribosyltransferase (HIS1).